The sequence spans 233 residues: UPF0128 protein MJ1463 (233 aa).

The protein belongs to the UPF0128 family.

This chain is UPF0128 protein MJ1463, found in Methanocaldococcus jannaschii (strain ATCC 43067 / DSM 2661 / JAL-1 / JCM 10045 / NBRC 100440) (Methanococcus jannaschii).